The sequence spans 180 residues: Probable Brix domain-containing ribosomal biogenesis protein (180 aa).

A Brix domain is found at 1–178 (MTTSRRPSPR…KPAEMVKRGR (178 aa)).

In terms of biological role, probably involved in the biogenesis of the ribosome. This is Probable Brix domain-containing ribosomal biogenesis protein from Aeropyrum pernix (strain ATCC 700893 / DSM 11879 / JCM 9820 / NBRC 100138 / K1).